A 521-amino-acid chain; its full sequence is Ribonuclease Y (521 aa).

A helical transmembrane segment spans residues 10–30 (LIITAGVSIALAIVAFFLGYL). Residues 210–270 (TVSVVTLPND…IRREIAKLTL (61 aa)) enclose the KH domain. Residues 336–430 (VLAHSIEVAN…IQAADSVSAA (95 aa)) form the HD domain.

This sequence belongs to the RNase Y family.

The protein resides in the cell membrane. Its function is as follows. Endoribonuclease that initiates mRNA decay. This chain is Ribonuclease Y, found in Caldicellulosiruptor saccharolyticus (strain ATCC 43494 / DSM 8903 / Tp8T 6331).